The following is a 116-amino-acid chain: Large ribosomal subunit protein bL20 (116 aa).

It belongs to the bacterial ribosomal protein bL20 family.

Its function is as follows. Binds directly to 23S ribosomal RNA and is necessary for the in vitro assembly process of the 50S ribosomal subunit. It is not involved in the protein synthesizing functions of that subunit. In Fusobacterium nucleatum subsp. nucleatum (strain ATCC 25586 / DSM 15643 / BCRC 10681 / CIP 101130 / JCM 8532 / KCTC 2640 / LMG 13131 / VPI 4355), this protein is Large ribosomal subunit protein bL20.